A 59-amino-acid chain; its full sequence is Large ribosomal subunit protein bL32 (59 aa).

Residues 1–15 (MAVPKKKTSKSKRDM) show a composition bias toward basic residues. The segment at 1–26 (MAVPKKKTSKSKRDMRRATWNRKAAA) is disordered.

The protein belongs to the bacterial ribosomal protein bL32 family.

The chain is Large ribosomal subunit protein bL32 from Cyanothece sp. (strain PCC 7425 / ATCC 29141).